A 415-amino-acid polypeptide reads, in one-letter code: Methylthioribose-1-phosphate isomerase (415 aa).

Residue D284 is the Proton donor of the active site.

This sequence belongs to the eIF-2B alpha/beta/delta subunits family. MtnA subfamily.

The protein resides in the cytoplasm. It localises to the nucleus. The catalysed reaction is 5-(methylsulfanyl)-alpha-D-ribose 1-phosphate = 5-(methylsulfanyl)-D-ribulose 1-phosphate. Its pathway is amino-acid biosynthesis; L-methionine biosynthesis via salvage pathway; L-methionine from S-methyl-5-thio-alpha-D-ribose 1-phosphate: step 1/6. In terms of biological role, catalyzes the interconversion of methylthioribose-1-phosphate (MTR-1-P) into methylthioribulose-1-phosphate (MTRu-1-P). The sequence is that of Methylthioribose-1-phosphate isomerase from Candida glabrata (strain ATCC 2001 / BCRC 20586 / JCM 3761 / NBRC 0622 / NRRL Y-65 / CBS 138) (Yeast).